The following is a 505-amino-acid chain: Flagellin (505 aa).

This sequence belongs to the bacterial flagellin family.

Its subcellular location is the secreted. It is found in the bacterial flagellum. Flagellin is the subunit protein which polymerizes to form the filaments of bacterial flagella. This chain is Flagellin (fliC), found in Salmonella derby.